The primary structure comprises 540 residues: Chaperonin GroEL (540 aa).

Residues T30 to P33, D87 to T91, G415, and D496 each bind ATP.

It belongs to the chaperonin (HSP60) family. Forms a cylinder of 14 subunits composed of two heptameric rings stacked back-to-back. Interacts with the co-chaperonin GroES.

It localises to the cytoplasm. It carries out the reaction ATP + H2O + a folded polypeptide = ADP + phosphate + an unfolded polypeptide.. Together with its co-chaperonin GroES, plays an essential role in assisting protein folding. The GroEL-GroES system forms a nano-cage that allows encapsulation of the non-native substrate proteins and provides a physical environment optimized to promote and accelerate protein folding. The sequence is that of Chaperonin GroEL from Symbiobacterium thermophilum (strain DSM 24528 / JCM 14929 / IAM 14863 / T).